A 216-amino-acid polypeptide reads, in one-letter code: ATP phosphoribosyltransferase (216 aa).

Belongs to the ATP phosphoribosyltransferase family. Short subfamily. In terms of assembly, heteromultimer composed of HisG and HisZ subunits.

The protein resides in the cytoplasm. The enzyme catalyses 1-(5-phospho-beta-D-ribosyl)-ATP + diphosphate = 5-phospho-alpha-D-ribose 1-diphosphate + ATP. It participates in amino-acid biosynthesis; L-histidine biosynthesis; L-histidine from 5-phospho-alpha-D-ribose 1-diphosphate: step 1/9. Functionally, catalyzes the condensation of ATP and 5-phosphoribose 1-diphosphate to form N'-(5'-phosphoribosyl)-ATP (PR-ATP). Has a crucial role in the pathway because the rate of histidine biosynthesis seems to be controlled primarily by regulation of HisG enzymatic activity. This is ATP phosphoribosyltransferase from Lachnospira eligens (strain ATCC 27750 / DSM 3376 / VPI C15-48 / C15-B4) (Eubacterium eligens).